The following is a 141-amino-acid chain: Putative antiporter subunit mnhB2 (141 aa).

The next 4 membrane-spanning stretches (helical) occupy residues 10–30 (TVTKIVVFILLTFGFYVFFAG), 35–55 (GGGFIGGLIFSSAFILMFLAF), 70–90 (KLMIVGAIISALTAIVPVFFG), and 116–136 (LFELGILLTVVGVIVTIMLAL).

The protein belongs to the CPA3 antiporters (TC 2.A.63) subunit B family. As to quaternary structure, may form a heterooligomeric complex that consists of seven subunits: mnhA2, mnhB2, mnhC2, mnhD2, mnhE2, mnhF2 and mnhG2.

It localises to the cell membrane. The polypeptide is Putative antiporter subunit mnhB2 (mnhB2) (Staphylococcus haemolyticus (strain JCSC1435)).